Consider the following 239-residue polypeptide: Peptidyl-tRNA hydrolase (239 aa).

A tRNA-binding site is contributed by Tyr-14. The active-site Proton acceptor is His-19. Residues Phe-64, Asn-66, and Asn-112 each contribute to the tRNA site. The tract at residues Arg-186 to Lys-239 is disordered. Low complexity predominate over residues Ser-193 to Pro-204. A compositionally biased stretch (pro residues) spans Pro-210–Ala-222.

Belongs to the PTH family. Monomer.

The protein resides in the cytoplasm. The catalysed reaction is an N-acyl-L-alpha-aminoacyl-tRNA + H2O = an N-acyl-L-amino acid + a tRNA + H(+). Hydrolyzes ribosome-free peptidyl-tRNAs (with 1 or more amino acids incorporated), which drop off the ribosome during protein synthesis, or as a result of ribosome stalling. Its function is as follows. Catalyzes the release of premature peptidyl moieties from peptidyl-tRNA molecules trapped in stalled 50S ribosomal subunits, and thus maintains levels of free tRNAs and 50S ribosomes. The chain is Peptidyl-tRNA hydrolase from Ruegeria pomeroyi (strain ATCC 700808 / DSM 15171 / DSS-3) (Silicibacter pomeroyi).